The chain runs to 143 residues: Hemoglobin subunit alpha-1 (143 aa).

S2 carries the post-translational modification N-acetylserine. The Globin domain maps to 2–143 (SLTAKDKDTV…LSRALAEKYR (142 aa)). H60 contributes to the O2 binding site. Heme b is bound at residue H89.

The protein belongs to the globin family. As to quaternary structure, hb1 is a heterotetramer of two alpha-1 chains and two beta-1 chains. In terms of tissue distribution, red blood cells.

Involved in oxygen transport from gills to the various peripheral tissues. In Anarhichas minor (Arctic spotted wolffish), this protein is Hemoglobin subunit alpha-1 (hba1).